The sequence spans 387 residues: 3-ketoacyl-CoA thiolase (387 aa).

Cys91 (acyl-thioester intermediate) is an active-site residue. Active-site proton acceptor residues include His343 and Cys373.

Belongs to the thiolase-like superfamily. Thiolase family. In terms of assembly, heterotetramer of two alpha chains (FadB) and two beta chains (FadA).

The protein resides in the cytoplasm. It carries out the reaction an acyl-CoA + acetyl-CoA = a 3-oxoacyl-CoA + CoA. The protein operates within lipid metabolism; fatty acid beta-oxidation. In terms of biological role, catalyzes the final step of fatty acid oxidation in which acetyl-CoA is released and the CoA ester of a fatty acid two carbons shorter is formed. This Salmonella paratyphi A (strain ATCC 9150 / SARB42) protein is 3-ketoacyl-CoA thiolase.